A 100-amino-acid polypeptide reads, in one-letter code: Small ribosomal subunit protein uS14c (100 aa).

Belongs to the universal ribosomal protein uS14 family. As to quaternary structure, part of the 30S ribosomal subunit.

The protein resides in the plastid. It localises to the chloroplast. In terms of biological role, binds 16S rRNA, required for the assembly of 30S particles. This is Small ribosomal subunit protein uS14c from Zygnema circumcarinatum (Green alga).